Reading from the N-terminus, the 234-residue chain is SPX domain-containing protein 6 (234 aa).

The SPX domain maps to 1-137 (MKFGKLLKRQ…GGALAAPVAE (137 aa)). Residues 202–234 (GSSTHGRHSLPPLTLPDSDWLRSFQPPSPIPIQ) form a disordered region.

In terms of tissue distribution, predominantly expressed in roots and leaves.

In terms of biological role, may be involved in maintaining cellular Pi homeostasis when plants are exposed to an external change in Pi. The polypeptide is SPX domain-containing protein 6 (Oryza sativa subsp. japonica (Rice)).